The primary structure comprises 907 residues: Protein translocase subunit SecA (907 aa).

ATP is bound by residues Gln87, 105–109, and Asp512; that span reads GEGKT. A disordered region spans residues 862 to 885; that stretch reads AENQLDDGHSSDQNHSPMVRDERK. The segment covering 867-885 has biased composition (basic and acidic residues); sequence DDGHSSDQNHSPMVRDERK. Zn(2+) contacts are provided by Cys892, Cys894, Cys903, and His904.

The protein belongs to the SecA family. Monomer and homodimer. Part of the essential Sec protein translocation apparatus which comprises SecA, SecYEG and auxiliary proteins SecDF-YajC and YidC. It depends on Zn(2+) as a cofactor.

It is found in the cell inner membrane. The protein resides in the cytoplasm. It carries out the reaction ATP + H2O + cellular proteinSide 1 = ADP + phosphate + cellular proteinSide 2.. In terms of biological role, part of the Sec protein translocase complex. Interacts with the SecYEG preprotein conducting channel. Has a central role in coupling the hydrolysis of ATP to the transfer of proteins into and across the cell membrane, serving both as a receptor for the preprotein-SecB complex and as an ATP-driven molecular motor driving the stepwise translocation of polypeptide chains across the membrane. This Aliivibrio salmonicida (strain LFI1238) (Vibrio salmonicida (strain LFI1238)) protein is Protein translocase subunit SecA.